A 2186-amino-acid polypeptide reads, in one-letter code: Non-reducing polyketide synthase men2 (2186 aa).

Positions 16–255 (FFGDQTVDAL…MQLPLGTPAH (240 aa)) constitute a Starter acyltransferase (SAT) domain. The Ketosynthase family 3 (KS3) domain occupies 382 to 815 (SNLIAVVGQS…GGNNCVLLEE (434 aa)). Catalysis depends on for beta-ketoacyl synthase activity residues Cys-554, His-690, and His-729. A Malonyl-CoA:ACP transacylase (MAT) domain is found at 914-1204 (VFAFTGQGAQ…SSLVKSTLSA (291 aa)). The tract at residues 1299–1623 (TASLQQVRSE…TRRVLATVLG (325 aa)) is product template (PT) domain. An N-terminal hotdog fold region spans residues 1303 to 1434 (QQVRSEQING…CKLHFDKRGS (132 aa)). The PKS/mFAS DH domain occupies 1303-1619 (QQVRSEQING…FQRLTRRVLA (317 aa)). The Proton acceptor; for dehydratase activity role is filled by His-1335. Residues 1463–1619 (TGHRLPKSVV…FQRLTRRVLA (157 aa)) form a C-terminal hotdog fold region. The active-site Proton donor; for dehydratase activity is the Asp-1523. A Carrier 1 domain is found at 1666-1742 (VGDEKADAAI…GLRRAISELS (77 aa)). An O-(pantetheine 4'-phosphoryl)serine modification is found at Ser-1702. A disordered region spans residues 1747–1785 (GPASGSVSVSSSATTTHGMTTPSSTSSAQSSQSSQTPDG). Residues 1749–1783 (ASGSVSVSSSATTTHGMTTPSSTSSAQSSQSSQTP) show a composition bias toward low complexity. Residues 1784–1861 (DGPGIYANAV…HVRRALGSDS (78 aa)) form the Carrier 2 domain. An O-(pantetheine 4'-phosphoryl)serine modification is found at Ser-1821. A disordered region spans residues 1857–1878 (LGSDSDGDSKPKSAPAPPAPEP). Residues 1921 to 2163 (LFFLPDGTGY…TMPCDHLSLL (243 aa)) are thioesterase (TE) domain.

It depends on pantetheine 4'-phosphate as a cofactor.

It participates in secondary metabolite biosynthesis. Its function is as follows. Non-reducing polyketide synthase; part of the gene cluster that mediates the biosynthesis of menisporopsin A, a bioactive macrocyclic polylactone. The biosynthesis of menisporopsin A is performed by a reducing (man1) and a non-reducing (men2) polyketide synthase that catalyze the formation of each menisporopsin A subunits, while the esterification and cyclolactonization activities are probably peformed by the unusual thioesterase domain of men2. First, a reduced diketide intermediate, 3-hydroxybutyryl-S-ACP is produced by men1 and transferred to men2; this is followed by a second reduced diketide which is further elongated using 3 units of malonyl-coA to form a reduced pentaketide. The cyclization of this intermediate by the PT domain forms the second subunit, 2,4-dihydroxy-6-(2-hydroxy-n-propyl)benzoyl-S-ACP. The TE domain of men2 then esterifies the secondary hydroxyl group on the side chain of the second subunit with the acyl-TE of the first subunit to form the first ester intermediate. This process occurs iteratively to form a linear tetraester intermediate. The final subunit is formed by a similar process, except that an extra malonyl-CoA is required in an additional elongation step to form a reduced hexaketide intermediate, and the carbonyl group next to the secondary hydroxyl group is reduced by a trans-acting ketoreductase. Again, the PT domain catalyzes cyclization to form the largest subunit, 2,4-dihydroxy-6-(2,4-dihydroxy-n-pentyl) benzoyl-S-ACP. Then the linear pentaester intermediate is formed. In this step, if the intermediate transfer rate is slow, intra- molecular cyclization involving the secondary hydroxyl group of the pentaester intermediate may occur to form menisporopsin B. Alternatively, transfer of the pentaester intermediate to the TE domain would allow cyclolactonization to be catalyzed by the TE to form menisporopsin A. This is Non-reducing polyketide synthase men2 from Menisporopsis theobromae.